A 236-amino-acid chain; its full sequence is Cell division protein FtsQ (236 aa).

The Cytoplasmic portion of the chain corresponds to 1–14 (MWDNHQALNQVADW). The helical transmembrane segment at 15–37 (LFTLAGLTTIYLMVQWTIHLPLL) threads the bilayer. The region spanning 37 to 111 (LPLKEVHIRS…NGLDVVVEEH (75 aa)) is the POTRA domain. Residues 38–236 (PLKEVHIRSN…VSGFAARGTR (199 aa)) lie on the Periplasmic side of the membrane.

It belongs to the FtsQ/DivIB family. FtsQ subfamily. As to quaternary structure, part of a complex composed of FtsB, FtsL and FtsQ.

It is found in the cell inner membrane. Functionally, essential cell division protein. May link together the upstream cell division proteins, which are predominantly cytoplasmic, with the downstream cell division proteins, which are predominantly periplasmic. May control correct divisome assembly. In Nitrosospira multiformis (strain ATCC 25196 / NCIMB 11849 / C 71), this protein is Cell division protein FtsQ.